Reading from the N-terminus, the 270-residue chain is NADPH-dependent 7-cyano-7-deazaguanine reductase (270 aa).

A substrate-binding site is contributed by 79 to 81 (IES). NADPH is bound at residue 81-82 (SK). The active-site Thioimide intermediate is Cys-177. Asp-184 (proton donor) is an active-site residue. 216–217 (HE) serves as a coordination point for substrate. 245–246 (RG) serves as a coordination point for NADPH.

It belongs to the GTP cyclohydrolase I family. QueF type 2 subfamily. Homodimer.

It localises to the cytoplasm. It catalyses the reaction 7-aminomethyl-7-carbaguanine + 2 NADP(+) = 7-cyano-7-deazaguanine + 2 NADPH + 3 H(+). It participates in tRNA modification; tRNA-queuosine biosynthesis. Its function is as follows. Catalyzes the NADPH-dependent reduction of 7-cyano-7-deazaguanine (preQ0) to 7-aminomethyl-7-deazaguanine (preQ1). This Acinetobacter baumannii (strain ACICU) protein is NADPH-dependent 7-cyano-7-deazaguanine reductase.